The chain runs to 63 residues: SERF-like protein C1705.02 (63 aa).

Residues 1-13 show a composition bias toward basic and acidic residues; the sequence is MSRGNQRDVDRAR. Positions 1 to 63 are disordered; sequence MSRGNQRDVD…EANGGSKGKK (63 aa). Residues 14-24 are compositionally biased toward basic residues; it reads NLKKSQASKKK. Over residues 25–35 the composition is skewed to basic and acidic residues; that stretch reads QAGDPTKRLEA.

This sequence belongs to the SERF family.

The protein localises to the cytoplasm. It localises to the nucleus. It is found in the nucleolus. This is SERF-like protein C1705.02 from Schizosaccharomyces pombe (strain 972 / ATCC 24843) (Fission yeast).